The chain runs to 237 residues: ATP-dependent dethiobiotin synthetase BioD (237 aa).

An ATP-binding site is contributed by 21–26 (GVGKTV). Threonine 25 is a Mg(2+) binding site. Residue lysine 48 is part of the active site. Threonine 52 serves as a coordination point for substrate. ATP contacts are provided by residues aspartate 56, 117-120 (EALG), 177-178 (SC), and 209-211 (PYL). Mg(2+) contacts are provided by aspartate 56 and glutamate 117.

This sequence belongs to the dethiobiotin synthetase family. In terms of assembly, homodimer. The cofactor is Mg(2+).

It localises to the cytoplasm. It carries out the reaction (7R,8S)-7,8-diammoniononanoate + CO2 + ATP = (4R,5S)-dethiobiotin + ADP + phosphate + 3 H(+). The enzyme catalyses (7R,8S)-8-amino-7-(carboxyamino)nonanoate + ATP = (4R,5S)-dethiobiotin + ADP + phosphate + H(+). It participates in cofactor biosynthesis; biotin biosynthesis; biotin from 7,8-diaminononanoate: step 1/2. In terms of biological role, catalyzes a mechanistically unusual reaction, the ATP-dependent insertion of CO2 between the N7 and N8 nitrogen atoms of 7,8-diaminopelargonic acid (DAPA, also called 7,8-diammoniononanoate) to form a ureido ring. This cyanobacterium does not encode bioA (which catalyzes the formation of the precursor for this reaction in the cannonical pathway), instead it encodes bioU, which replaces bioA and also performs the first half of the cannonical BioD reaction. Thus in this bacteria BioD has a different substrate. In Synechocystis replacement of bioU by bioA from E.coli leads to biotin synthesis, showing BioD can use the 'cannonical' 7,8-diammoniononanoate as a substrate. The polypeptide is ATP-dependent dethiobiotin synthetase BioD (Synechocystis sp. (strain ATCC 27184 / PCC 6803 / Kazusa)).